The sequence spans 625 residues: Protein LEO1 homolog (625 aa).

Disordered stretches follow at residues 1-214 (MVKG…DMVL) and 415-625 (EREK…SDED). 2 stretches are compositionally biased toward acidic residues: residues 40–55 (DEAEGGVEPEGEGEAE) and 63–80 (EAESDGEQGDVELDPGES). Basic and acidic residues-rich tracts occupy residues 97-113 (SEARDSDSDNKEEEHGG), 121-137 (QEVVESGSERSGEKHYE), and 182-197 (EYVRNDVEQDEHRSPI). A Phosphoserine modification is found at serine 203. Over residues 415–425 (EREKEKREKAE) the composition is skewed to basic and acidic residues. Residues 415–539 (EREKEKREKA…ETEEEEEEKS (125 aa)) are a coiled coil. The segment covering 426–436 (SQNLKASTKLS) has biased composition (polar residues). The segment covering 471–491 (YRSNRGYEEDLEAEAQRERRI) has biased composition (basic and acidic residues). Positions 492 to 501 (LNAKKSHKGI) are enriched in basic residues. Residues 523–537 (EREESEYETEEEEEE) show a composition bias toward acidic residues. Residues 538 to 547 (KSPARGRGKD) show a composition bias toward basic and acidic residues. Phosphoserine occurs at positions 548, 570, 600, 605, and 622. Positions 548 to 561 (SEDEYEEDAEEDEE) are enriched in acidic residues.

The protein belongs to the LEO1 family. Component of the nuclear PAF1 complex (PAF1C), which consists of VIP2/ELF7/PAF1, VIP3/SKI8/WDR61, VIP4/LEO1, VIP5/RTF1, VIP6/ELF8/CTR9 and CDC73. Interacts with VIP3 and VIP6. In terms of tissue distribution, expressed in roots, shoot apices, stems, cauline leaves, inflorescence apices and flowers.

Its subcellular location is the nucleus. In terms of biological role, component of the PAF1 complex (PAF1C) which is involved in histone modifications such as methylation on histone H3 'Lys-4' (H3K4me3). Involved in regulation of flowering time. Required for the expression of the flowering repressor and MADS box gene FLC. Involved in the control of seed dormancy and germination. In Arabidopsis thaliana (Mouse-ear cress), this protein is Protein LEO1 homolog.